A 216-amino-acid polypeptide reads, in one-letter code: Phosphatidylserine decarboxylase proenzyme (216 aa).

Catalysis depends on serine 183, which acts as the Schiff-base intermediate with substrate; via pyruvic acid. Position 183 is a pyruvic acid (Ser); by autocatalysis (serine 183).

It belongs to the phosphatidylserine decarboxylase family. PSD-A subfamily. Heterodimer of a large membrane-associated beta subunit and a small pyruvoyl-containing alpha subunit. Pyruvate is required as a cofactor. Post-translationally, is synthesized initially as an inactive proenzyme. Formation of the active enzyme involves a self-maturation process in which the active site pyruvoyl group is generated from an internal serine residue via an autocatalytic post-translational modification. Two non-identical subunits are generated from the proenzyme in this reaction, and the pyruvate is formed at the N-terminus of the alpha chain, which is derived from the carboxyl end of the proenzyme. The post-translation cleavage follows an unusual pathway, termed non-hydrolytic serinolysis, in which the side chain hydroxyl group of the serine supplies its oxygen atom to form the C-terminus of the beta chain, while the remainder of the serine residue undergoes an oxidative deamination to produce ammonia and the pyruvoyl prosthetic group on the alpha chain.

It localises to the cell membrane. It carries out the reaction a 1,2-diacyl-sn-glycero-3-phospho-L-serine + H(+) = a 1,2-diacyl-sn-glycero-3-phosphoethanolamine + CO2. Its pathway is phospholipid metabolism; phosphatidylethanolamine biosynthesis; phosphatidylethanolamine from CDP-diacylglycerol: step 2/2. Catalyzes the formation of phosphatidylethanolamine (PtdEtn) from phosphatidylserine (PtdSer). In Chlorobaculum tepidum (strain ATCC 49652 / DSM 12025 / NBRC 103806 / TLS) (Chlorobium tepidum), this protein is Phosphatidylserine decarboxylase proenzyme.